Here is a 271-residue protein sequence, read N- to C-terminus: uncharacterized protein (271 aa).

Positions Met-1–Ala-22 are cleaved as a signal peptide.

This is an uncharacterized protein from Sinorhizobium fredii (strain NBRC 101917 / NGR234).